We begin with the raw amino-acid sequence, 428 residues long: Histidine--tRNA ligase (428 aa).

Belongs to the class-II aminoacyl-tRNA synthetase family.

The protein localises to the cytoplasm. The catalysed reaction is tRNA(His) + L-histidine + ATP = L-histidyl-tRNA(His) + AMP + diphosphate + H(+). This is Histidine--tRNA ligase from Korarchaeum cryptofilum (strain OPF8).